Consider the following 288-residue polypeptide: Shikimate dehydrogenase (NADP(+)) (288 aa).

Shikimate contacts are provided by residues S15 to S17 and T64. The Proton acceptor role is filled by K68. NADP(+) is bound at residue E83. The shikimate site is built by N92 and D117. Residues G141–A145, N165–K170, and M232 each bind NADP(+). A shikimate-binding site is contributed by Y234. Residue G254 coordinates NADP(+).

This sequence belongs to the shikimate dehydrogenase family. As to quaternary structure, homodimer.

It carries out the reaction shikimate + NADP(+) = 3-dehydroshikimate + NADPH + H(+). Its pathway is metabolic intermediate biosynthesis; chorismate biosynthesis; chorismate from D-erythrose 4-phosphate and phosphoenolpyruvate: step 4/7. Involved in the biosynthesis of the chorismate, which leads to the biosynthesis of aromatic amino acids. Catalyzes the reversible NADPH linked reduction of 3-dehydroshikimate (DHSA) to yield shikimate (SA). The polypeptide is Shikimate dehydrogenase (NADP(+)) (Psychrobacter arcticus (strain DSM 17307 / VKM B-2377 / 273-4)).